The sequence spans 221 residues: DVVIKAQVLAGGRIVFSPEEAKLITKQTGAKGRICNQVLVCERREYYFAITMERSFQGPVLIGSAQGGVNIEDVAAENPEAIVKKMGFPSNIVDSAAENMIKLYNLFLKINFDSNSAYRQKIFDLQDWSQEDERLHGGTPANFLDVGGGATVQQVTEAFKVQAILVNIFGGIMRLQGTRVDDAKILACDDLDEAAKMVVKLSEIVTLAKEAHVDVKFQLPI.

Residues 1-122 (DVVIKAQVLA…DSNSAYRQKI (122 aa)) enclose the ATP-grasp domain. Position 5 (lysine 5) interacts with ATP. Lysine 22 and lysine 26 each carry N6-acetyllysine. The residue at position 114 (serine 114) is a Phosphoserine. Residue threonine 139 is modified to Phosphothreonine. Position 171-173 (171-173 (GIM)) interacts with substrate. At lysine 196 the chain carries N6-acetyllysine.

It belongs to the succinate/malate CoA ligase beta subunit family. ATP-specific subunit beta subfamily. Heterodimer of an alpha and a beta subunit. The beta subunit determines specificity for ATP. Interacts with ALAS2.

It is found in the mitochondrion. The enzyme catalyses succinate + ATP + CoA = succinyl-CoA + ADP + phosphate. It participates in carbohydrate metabolism; tricarboxylic acid cycle; succinate from succinyl-CoA (ligase route): step 1/1. Its function is as follows. ATP-specific succinyl-CoA synthetase functions in the citric acid cycle (TCA), coupling the hydrolysis of succinyl-CoA to the synthesis of ATP and thus represents the only step of substrate-level phosphorylation in the TCA. The beta subunit provides nucleotide specificity of the enzyme and binds the substrate succinate, while the binding sites for coenzyme A and phosphate are found in the alpha subunit. The chain is Succinate--CoA ligase [ADP-forming] subunit beta, mitochondrial from Mesocricetus auratus (Golden hamster).